The chain runs to 112 residues: MKITVVLVLLATFLGCVMIHESEASTTTTSTSASATTTTSASATTTTSASATTTTSASATTTTASPSSSSKKKTVTHYKRKVKRPKKVRKITRRRGLRSRNGRSSRNRRSEE.

Residues 1–24 (MKITVVLVLLATFLGCVMIHESEA) form the signal peptide. The span at 24–69 (ASTTTTSTSASATTTTSASATTTTSASATTTTSASATTTTASPSSS) shows a compositional bias: low complexity. The interval 24–112 (ASTTTTSTSA…RSSRNRRSEE (89 aa)) is disordered. 4 repeat units span residues 31–38 (TSASATTT), 39–46 (TSASATTT), 47–54 (TSASATTT), and 55–62 (TSASATTT). The tract at residues 31-62 (TSASATTTTSASATTTTSASATTTTSASATTT) is 4 X 8 AA tandem repeats of T-S-A-S-A-T-T-T. The span at 70–112 (SKKKTVTHYKRKVKRPKKVRKITRRRGLRSRNGRSSRNRRSEE) shows a compositional bias: basic residues.

The protein to NG-1, also to SGS-3. As to expression, salivary gland specific.

It localises to the secreted. This chain is Protein new-glue 2 (ng2), found in Drosophila melanogaster (Fruit fly).